Here is a 1830-residue protein sequence, read N- to C-terminus: Urea amidolyase (1830 aa).

ATP is bound by residues 115-122, K740, E823, and N858; that span reads GAIVIGKT. Residues 625–1068 enclose the Biotin carboxylation domain; the sequence is PFETVLIANR…ATKILDSYDY (444 aa). The ATP-grasp domain occupies 744–941; sequence REIAEKAGVP…LVEWMLRIAA (198 aa). Positions 1752–1830 constitute a Biotinyl-binding domain; the sequence is AVEEEYPEDA…DAGDLVAVIQ (79 aa). K1796 bears the N6-biotinyllysine mark.

Belongs to the DUR1,2 family. As to quaternary structure, monomer. Requires biotin as cofactor.

It carries out the reaction urea + hydrogencarbonate + ATP = urea-1-carboxylate + ADP + phosphate + H(+). The enzyme catalyses urea-1-carboxylate + H2O + 3 H(+) = 2 NH4(+) + 2 CO2. The protein operates within nitrogen metabolism; urea degradation; CO(2) and NH(3) from urea (allophanate route): step 1/2. It functions in the pathway nitrogen metabolism; urea degradation; CO(2) and NH(3) from urea (allophanate route): step 2/2. Involved in uracil catabolism. Hydrolysis of urea to ammonia and CO(2). The chain is Urea amidolyase (DUR1,2) from Lachancea kluyveri (Yeast).